An 83-amino-acid chain; its full sequence is Cytochrome b559 subunit alpha (83 aa).

Residues 21 to 35 (IIHTITVPMLFLAGW) form a helical membrane-spanning segment. Histidine 23 is a heme binding site.

The protein belongs to the PsbE/PsbF family. In terms of assembly, heterodimer of an alpha subunit and a beta subunit. PSII is composed of 1 copy each of membrane proteins PsbA, PsbB, PsbC, PsbD, PsbE, PsbF, PsbH, PsbI, PsbJ, PsbK, PsbL, PsbM, PsbT, PsbX, PsbY, PsbZ, Psb30/Ycf12, peripheral proteins PsbO, CyanoQ (PsbQ), PsbU, PsbV and a large number of cofactors. It forms dimeric complexes. Requires heme b as cofactor.

It localises to the cellular thylakoid membrane. This b-type cytochrome is tightly associated with the reaction center of photosystem II (PSII). PSII is a light-driven water:plastoquinone oxidoreductase that uses light energy to abstract electrons from H(2)O, generating O(2) and a proton gradient subsequently used for ATP formation. It consists of a core antenna complex that captures photons, and an electron transfer chain that converts photonic excitation into a charge separation. The polypeptide is Cytochrome b559 subunit alpha (Acaryochloris marina (strain MBIC 11017)).